The sequence spans 463 residues: Soluble pyridine nucleotide transhydrogenase (463 aa).

35–44 contributes to the FAD binding site; sequence EDKPTVGGNC.

Belongs to the class-I pyridine nucleotide-disulfide oxidoreductase family. FAD serves as cofactor.

The protein localises to the cytoplasm. The enzyme catalyses NAD(+) + NADPH = NADH + NADP(+). Conversion of NADPH, generated by peripheral catabolic pathways, to NADH, which can enter the respiratory chain for energy generation. The polypeptide is Soluble pyridine nucleotide transhydrogenase (Marinobacter nauticus (strain ATCC 700491 / DSM 11845 / VT8) (Marinobacter aquaeolei)).